Consider the following 225-residue polypeptide: NAD(P)H-quinone oxidoreductase subunit K, chloroplastic (225 aa).

Positions 43, 44, 108, and 139 each coordinate [4Fe-4S] cluster.

This sequence belongs to the complex I 20 kDa subunit family. In terms of assembly, NDH is composed of at least 16 different subunits, 5 of which are encoded in the nucleus. It depends on [4Fe-4S] cluster as a cofactor.

It localises to the plastid. Its subcellular location is the chloroplast thylakoid membrane. It carries out the reaction a plastoquinone + NADH + (n+1) H(+)(in) = a plastoquinol + NAD(+) + n H(+)(out). The enzyme catalyses a plastoquinone + NADPH + (n+1) H(+)(in) = a plastoquinol + NADP(+) + n H(+)(out). NDH shuttles electrons from NAD(P)H:plastoquinone, via FMN and iron-sulfur (Fe-S) centers, to quinones in the photosynthetic chain and possibly in a chloroplast respiratory chain. The immediate electron acceptor for the enzyme in this species is believed to be plastoquinone. Couples the redox reaction to proton translocation, and thus conserves the redox energy in a proton gradient. The sequence is that of NAD(P)H-quinone oxidoreductase subunit K, chloroplastic from Lepidium virginicum (Virginia pepperweed).